The chain runs to 275 residues: 2-dehydro-3-deoxyphosphooctonate aldolase (275 aa).

It belongs to the KdsA family.

The protein localises to the cytoplasm. It catalyses the reaction D-arabinose 5-phosphate + phosphoenolpyruvate + H2O = 3-deoxy-alpha-D-manno-2-octulosonate-8-phosphate + phosphate. Its pathway is carbohydrate biosynthesis; 3-deoxy-D-manno-octulosonate biosynthesis; 3-deoxy-D-manno-octulosonate from D-ribulose 5-phosphate: step 2/3. The protein operates within bacterial outer membrane biogenesis; lipopolysaccharide biosynthesis. This is 2-dehydro-3-deoxyphosphooctonate aldolase from Protochlamydia amoebophila (strain UWE25).